A 546-amino-acid chain; its full sequence is Cysteine--tRNA ligase (546 aa).

Cys-57 is a binding site for Zn(2+). A 'HIGH' region motif is present at residues 59-69 (ATVQSSPHIGH). The tract at residues 211–236 (PSVDATGADKYNPVDPADASPDKHDP) is disordered. Positions 270, 295, and 299 each coordinate Zn(2+). Residues 326-330 (KMSKS) carry the 'KMSKS' region motif. Residue Lys-329 participates in ATP binding.

The protein belongs to the class-I aminoacyl-tRNA synthetase family. In terms of assembly, monomer. It depends on Zn(2+) as a cofactor.

The protein resides in the cytoplasm. It catalyses the reaction tRNA(Cys) + L-cysteine + ATP = L-cysteinyl-tRNA(Cys) + AMP + diphosphate. This Bifidobacterium longum (strain NCC 2705) protein is Cysteine--tRNA ligase.